A 206-amino-acid chain; its full sequence is Tektin bundle-interacting protein 1 (206 aa).

In terms of assembly, microtubule inner protein component of sperm flagellar doublet microtubules.

Its subcellular location is the cytoplasm. The protein resides in the cytoskeleton. It is found in the cilium axoneme. It localises to the flagellum axoneme. In terms of biological role, microtubule inner protein (MIP) part of the dynein-decorated doublet microtubules (DMTs) in cilia axoneme, which is required for motile cilia beating. Located at the center of the tektin bundle where may function to recruit tektins or stabilize the bundle. This is Tektin bundle-interacting protein 1 from Mus musculus (Mouse).